We begin with the raw amino-acid sequence, 407 residues long: Phosphopentomutase (407 aa).

Mn(2+) contacts are provided by Asp-10, Asp-306, His-311, Asp-347, His-348, and His-359.

This sequence belongs to the phosphopentomutase family. Mn(2+) is required as a cofactor.

The protein resides in the cytoplasm. The enzyme catalyses 2-deoxy-alpha-D-ribose 1-phosphate = 2-deoxy-D-ribose 5-phosphate. The catalysed reaction is alpha-D-ribose 1-phosphate = D-ribose 5-phosphate. It participates in carbohydrate degradation; 2-deoxy-D-ribose 1-phosphate degradation; D-glyceraldehyde 3-phosphate and acetaldehyde from 2-deoxy-alpha-D-ribose 1-phosphate: step 1/2. Isomerase that catalyzes the conversion of deoxy-ribose 1-phosphate (dRib-1-P) and ribose 1-phosphate (Rib-1-P) to deoxy-ribose 5-phosphate (dRib-5-P) and ribose 5-phosphate (Rib-5-P), respectively. This chain is Phosphopentomutase, found in Cronobacter sakazakii (strain ATCC BAA-894) (Enterobacter sakazakii).